A 74-amino-acid chain; its full sequence is Large ribosomal subunit protein bL27c (74 aa).

Belongs to the bacterial ribosomal protein bL27 family.

The protein resides in the plastid. The protein localises to the chloroplast. The chain is Large ribosomal subunit protein bL27c (rpl27) from Calyptrosphaera sphaeroidea.